The sequence spans 390 residues: Exodeoxyribonuclease 7 large subunit (390 aa).

This sequence belongs to the XseA family. As to quaternary structure, heterooligomer composed of large and small subunits.

Its subcellular location is the cytoplasm. It carries out the reaction Exonucleolytic cleavage in either 5'- to 3'- or 3'- to 5'-direction to yield nucleoside 5'-phosphates.. Bidirectionally degrades single-stranded DNA into large acid-insoluble oligonucleotides, which are then degraded further into small acid-soluble oligonucleotides. The protein is Exodeoxyribonuclease 7 large subunit of Synechococcus sp. (strain CC9311).